The sequence spans 467 residues: Zinc finger protein 410 (467 aa).

Disordered regions lie at residues 84–111 (PDGE…SLLQ) and 187–214 (NAKT…PLPQ). C2H2-type zinc fingers lie at residues 219–243 (LKCT…LKTH), 249–273 (FICP…MRTH), 279–303 (FVCP…LRIH), 309–333 (FLCE…LVVH), and 339–362 (HQCQ…RKHH). Positions 221, 226, 239, 243, 251, 256, 269, 273, 281, 286, 299, 303, 311, 316, 329, 333, 341, 344, 357, and 361 each coordinate Zn(2+).

As to quaternary structure, interacts with CDKN2A/p14ARF. O-glycosylated. O-GlcNAcylation may occur in response to increasing glucose levels and affect transcription factor activity. Post-translationally, sumoylated. Sumoylation increases its half-life, possibly by blocking ubiquitin-mediated degradation.

The protein localises to the nucleus. Its subcellular location is the chromosome. Its function is as follows. Transcription factor that binds to the sequence motif 5'-CATCCCATAATA-3', and is specifically required to silence expression of fetal hemoglobin in adult erythroid cells. Prevents expression of fetal hemoglobin genes HBG1 and HBG2 through CHD4: acts as a direct transcriptional activator of CHD4, a central component of the NuRD complex that represses transcription of fetal hemoglobin genes HBG1 and HBG2 in erythroid cells. May also activate transcription of matrix-remodeling genes such as MMP1 during fibroblast senescence. May activate transcription of the gap junction gene GJC1, perhaps in response to increasing glucose. However, recent studies suggest that ZNF410 is dedicated to regulate expression of a single gene: CHD4. The chain is Zinc finger protein 410 from Bos taurus (Bovine).